The chain runs to 300 residues: 33 kDa chaperonin (300 aa).

Intrachain disulfides connect C240/C242 and C273/C276.

The protein belongs to the HSP33 family. Post-translationally, under oxidizing conditions two disulfide bonds are formed involving the reactive cysteines. Under reducing conditions zinc is bound to the reactive cysteines and the protein is inactive.

The protein resides in the cytoplasm. Redox regulated molecular chaperone. Protects both thermally unfolding and oxidatively damaged proteins from irreversible aggregation. Plays an important role in the bacterial defense system toward oxidative stress. The chain is 33 kDa chaperonin from Cyanothece sp. (strain PCC 7425 / ATCC 29141).